Reading from the N-terminus, the 261-residue chain is Glucose 1-dehydrogenase A (261 aa).

Residue 11-35 (VITGGSTGLGRAMAVRFGQEEAKVV) coordinates NADP(+). A substrate-binding site is contributed by S145. The Proton acceptor role is filled by Y158.

The protein belongs to the short-chain dehydrogenases/reductases (SDR) family. In terms of assembly, homotetramer.

The enzyme catalyses D-glucose + NAD(+) = D-glucono-1,5-lactone + NADH + H(+). It carries out the reaction D-glucose + NADP(+) = D-glucono-1,5-lactone + NADPH + H(+). The protein is Glucose 1-dehydrogenase A (gdhA) of Priestia megaterium (Bacillus megaterium).